Reading from the N-terminus, the 98-residue chain is Cell division topological specificity factor (98 aa).

Belongs to the MinE family.

Prevents the cell division inhibition by proteins MinC and MinD at internal division sites while permitting inhibition at polar sites. This ensures cell division at the proper site by restricting the formation of a division septum at the midpoint of the long axis of the cell. This chain is Cell division topological specificity factor, found in Nitrosomonas europaea (strain ATCC 19718 / CIP 103999 / KCTC 2705 / NBRC 14298).